A 299-amino-acid polypeptide reads, in one-letter code: NmrA-like family domain-containing protein 1 (299 aa).

NADP(+) is bound by residues 11-16 (GATGAQ), 37-41 (RDPGQ), 58-59 (DQ), 79-81 (TNY), Lys92, Lys133, and 155-158 (YFEN). Residues 153–189 (PCYFENLLSYFLPQKAPDGRSYLLSLPMGDVPIDGMS) form an interaction with ASS1 region.

It belongs to the NmrA-type oxidoreductase family. As to quaternary structure, homodimer. Interacts with ASS1. Interaction is enhanced by low NADPH/NADP(+) ratios, which results in inhibition of ASS1 activity.

The protein resides in the cytoplasm. The protein localises to the perinuclear region. It localises to the nucleus. Functionally, redox sensor protein. Undergoes restructuring and subcellular redistribution in response to changes in intracellular NADPH/NADP(+) levels. At low NADPH concentrations the protein is found mainly as a monomer, and binds argininosuccinate synthase (ASS1), the enzyme involved in nitric oxide synthesis. Association with ASS1 impairs its activity and reduces the production of nitric oxide, which subsecuently prevents apoptosis. Under normal NADPH concentrations, the protein is found as a dimer and hides the binding site for ASS1. The homodimer binds one molecule of NADPH. Has higher affinity for NADPH than for NADP(+). Binding to NADPH is necessary to form a stable dimer. The sequence is that of NmrA-like family domain-containing protein 1 (NMRAL1) from Bos taurus (Bovine).